We begin with the raw amino-acid sequence, 577 residues long: 2-succinyl-5-enolpyruvyl-6-hydroxy-3-cyclohexene-1-carboxylate synthase (577 aa).

This sequence belongs to the TPP enzyme family. MenD subfamily. In terms of assembly, homodimer. Mg(2+) serves as cofactor. Requires Mn(2+) as cofactor. It depends on thiamine diphosphate as a cofactor.

The enzyme catalyses isochorismate + 2-oxoglutarate + H(+) = 5-enolpyruvoyl-6-hydroxy-2-succinyl-cyclohex-3-ene-1-carboxylate + CO2. It participates in quinol/quinone metabolism; 1,4-dihydroxy-2-naphthoate biosynthesis; 1,4-dihydroxy-2-naphthoate from chorismate: step 2/7. Its pathway is quinol/quinone metabolism; menaquinone biosynthesis. Catalyzes the thiamine diphosphate-dependent decarboxylation of 2-oxoglutarate and the subsequent addition of the resulting succinic semialdehyde-thiamine pyrophosphate anion to isochorismate to yield 2-succinyl-5-enolpyruvyl-6-hydroxy-3-cyclohexene-1-carboxylate (SEPHCHC). The chain is 2-succinyl-5-enolpyruvyl-6-hydroxy-3-cyclohexene-1-carboxylate synthase from Geobacillus kaustophilus (strain HTA426).